The sequence spans 874 residues: Alanine--tRNA ligase (874 aa).

His-563, His-567, Cys-665, and His-669 together coordinate Zn(2+).

Belongs to the class-II aminoacyl-tRNA synthetase family. Requires Zn(2+) as cofactor.

Its subcellular location is the cytoplasm. The catalysed reaction is tRNA(Ala) + L-alanine + ATP = L-alanyl-tRNA(Ala) + AMP + diphosphate. Functionally, catalyzes the attachment of alanine to tRNA(Ala) in a two-step reaction: alanine is first activated by ATP to form Ala-AMP and then transferred to the acceptor end of tRNA(Ala). Also edits incorrectly charged Ser-tRNA(Ala) and Gly-tRNA(Ala) via its editing domain. The polypeptide is Alanine--tRNA ligase (Actinobacillus pleuropneumoniae serotype 3 (strain JL03)).